Consider the following 466-residue polypeptide: Coproporphyrinogen III oxidase (466 aa).

FAD is bound by residues 9 to 14, 34 to 35, K42, 56 to 59, V254, and 446 to 448; these read GAGITG, EA, GPES, and VGL.

Belongs to the protoporphyrinogen/coproporphyrinogen oxidase family. Coproporphyrinogen III oxidase subfamily. The cofactor is FAD.

It is found in the cytoplasm. The catalysed reaction is coproporphyrinogen III + 3 O2 = coproporphyrin III + 3 H2O2. It functions in the pathway porphyrin-containing compound metabolism; protoheme biosynthesis. The generation of protoporphyrin IX, but not coproporphyrin III, is stimulated by heme-bound HemQ. This stimulatory effect is mediated by superoxide. Inhibited by acifluorfen analogs. Its function is as follows. Involved in coproporphyrin-dependent heme b biosynthesis. Catalyzes the oxidation of coproporphyrinogen III to coproporphyrin III. Can also oxidize protoporphyrinogen IX. The protein is Coproporphyrinogen III oxidase of Staphylococcus aureus (strain NCTC 8325 / PS 47).